A 221-amino-acid polypeptide reads, in one-letter code: Probable septum site-determining protein MinC (221 aa).

The protein belongs to the MinC family. In terms of assembly, interacts with MinD and FtsZ.

Cell division inhibitor that blocks the formation of polar Z ring septums. Rapidly oscillates between the poles of the cell to destabilize FtsZ filaments that have formed before they mature into polar Z rings. Prevents FtsZ polymerization. The sequence is that of Probable septum site-determining protein MinC from Prochlorococcus marinus (strain SARG / CCMP1375 / SS120).